The chain runs to 147 residues: Hemoglobin subunit gamma (147 aa).

The 145-residue stretch at 3 to 147 (HFTAEEKAAI…VANALAYKYH (145 aa)) folds into the Globin domain. The heme b site is built by His64 and His93.

Belongs to the globin family. As to quaternary structure, heterotetramer of two alpha chains and two gamma chains in fetal hemoglobin (Hb F). In terms of tissue distribution, red blood cells.

Functionally, gamma chains make up the fetal hemoglobin F, in combination with alpha chains. This Loxodonta africana (African elephant) protein is Hemoglobin subunit gamma (HBG).